Reading from the N-terminus, the 560-residue chain is MSEHSRNSDQEELLDEEINEDEILANLSAEELKELQSEMEVMAPDPSLPVGMIQKDQTDKPPTGNFNHKSLVDYMYWEKASRRMLEEERVPVTFVKSEEKTQEEHEEIEKRNKNMAQYLKEKLNNEIVANKRESKGSSNIQETDEEDEEEEDDDDDDEGEDDGEESEETNREEEGKAKEQIRNCENNCQQVTDKAFKEQRDRPEAQEQSEKKISKLDPKKLALDTSFLKVSTRPSGNQTDLDGSLRRVRKNDPDMKELNLNNIENIPKEMLLDFVNAMKKNKHIKTFSLANVGADENVAFALANMLRENRSITTLNIESNFITGKGIVAIMRCLQFNETLTELRFHNQRHMLGHHAEMEIARLLKANNTLLKMGYHFELPGPRMVVTNLLTRNQDKQRQKRQEEQKQQQLKEQKKLIAMLENGLGLPPGMWELLGGPKPDSRMQEFFQPPPPRPPNPQNVPFSQRSEMMKKPSQAPKYRTDPDSFRVVKLKRIQRKSRMPEAREPPEKTNLKDVIKTLKPVPRNRPPPLVEITPRDQLLNDIRHSSVAYLKPVQLPKELA.

Residues 1–49 (MSEHSRNSDQEELLDEEINEDEILANLSAEELKELQSEMEVMAPDPSLP) form an interaction with tropomyosin alpha region. A coiled-coil region spans residues 16-42 (EEINEDEILANLSAEELKELQSEMEVM). Disordered regions lie at residues 45–68 (DPSLPVGMIQKDQTDKPPTGNFNH) and 127–217 (IVAN…SKLD). Positions 142–167 (ETDEEDEEEEDDDDDDEGEDDGEESE) are enriched in acidic residues. Residues 168–182 (ETNREEEGKAKEQIR) are compositionally biased toward basic and acidic residues. The segment covering 183 to 192 (NCENNCQQVT) has biased composition (polar residues). Basic and acidic residues predominate over residues 194-217 (KAFKEQRDRPEAQEQSEKKISKLD). A coiled-coil region spans residues 386–425 (VTNLLTRNQDKQRQKRQEEQKQQQLKEQKKLIAMLENGLG). Disordered regions lie at residues 437–480 (PKPD…KYRT) and 494–530 (QRKSRMPEAREPPEKTNLKDVIKTLKPVPRNRPPPLV). The span at 448–458 (QPPPPRPPNPQ) shows a compositional bias: pro residues. Residues 498-516 (RMPEAREPPEKTNLKDVIK) show a composition bias toward basic and acidic residues. Positions 534-553 (PRDQLLNDIRHSSVAYLKPV) constitute a WH2 domain.

This sequence belongs to the tropomodulin family. In terms of assembly, may interact with tropomyosin alpha (TPM1/2) N-terminus. Interacts with KLHL40; leading to stabilization. Ubiquitinated, leading to its degradation. Interaction with KLHL40 negatively regulates ubiquitination and degradation. Expressed in cardiac and at higher levels in skeletal muscles (at protein level).

Its subcellular location is the cytoplasm. It is found in the myofibril. It localises to the sarcomere. The protein resides in the m line. The protein localises to the a band. Its subcellular location is the cytoskeleton. Its function is as follows. Essential for the organization of sarcomeric actin thin filaments in skeletal muscle. Increases the rate of actin polymerization. The sequence is that of Leiomodin-3 (LMOD3) from Homo sapiens (Human).